We begin with the raw amino-acid sequence, 304 residues long: uncharacterized protein (304 aa).

A run of 9 helical transmembrane segments spans residues 9-29, 67-87, 100-120, 131-151, 159-179, 189-209, 222-242, 252-272, and 278-298; these read VFYV…SIHF, IILY…GNMF, AGSI…GIFF, EFYI…INSS, FFLG…QNLI, AVVI…CLAF, IGML…GMLM, ITVF…IGYL, and INIY…LALK. EamA domains lie at 13-148 and 171-298; these read LLMG…IFVI and FIQS…LALK.

This sequence belongs to the EamA transporter family.

The protein localises to the cell membrane. This is an uncharacterized protein from Haemophilus influenzae (strain ATCC 51907 / DSM 11121 / KW20 / Rd).